A 230-amino-acid polypeptide reads, in one-letter code: Homeobox protein Hox-B5 (230 aa).

The tract at residues 1–135 (GGGGGNVSGS…GAAGTDGQSP (135 aa)) is disordered. The segment covering 49–65 (FPGQESSRFRANQNCPL) has biased composition (polar residues). The segment covering 87-103 (ATSSAHFTETEETSASS) has biased composition (low complexity). The Antp-type hexapeptide signature appears at 137 to 142 (IFPWMR). Residues 155-214 (GKRARTAYTRYQTLELEKEFHFNRYLTRRRRIEIAHTLCLSERQIKIWFQNRRMKWKKDN) constitute a DNA-binding region (homeobox).

It belongs to the Antp homeobox family.

Its subcellular location is the nucleus. In terms of biological role, sequence-specific transcription factor which is part of a developmental regulatory system that provides cells with specific positional identities on the anterior-posterior axis. This chain is Homeobox protein Hox-B5 (hoxb5), found in Xenopus laevis (African clawed frog).